The following is a 178-amino-acid chain: Aminoglycoside 2'-N-acetyltransferase (178 aa).

The 164-residue stretch at 8 to 171 folds into the N-acetyltransferase domain; it reads LHTSQLTLSE…VDFTASLYCD (164 aa). Substrate is bound by residues Asp32 and 79–80; that span reads EA. Residues 81–83 and 88–93 contribute to the CoA site; these read MVV and RRQGIG. Residues Ser114 and 148–149 each bind substrate; that span reads EE.

The protein belongs to the AAC(2')-I acetyltransferase family. As to quaternary structure, homodimer.

It catalyses the reaction gentamicin C1a + acetyl-CoA = N(2')-acetylgentamicin C1a + CoA + H(+). Functionally, catalyzes the coenzyme A-dependent acetylation of the 2' hydroxyl or amino group of a broad spectrum of aminoglycosides. It confers resistance to aminoglycosides. This chain is Aminoglycoside 2'-N-acetyltransferase (aac), found in Providencia stuartii.